We begin with the raw amino-acid sequence, 89 residues long: Small ribosomal subunit protein uS15 (89 aa).

The protein belongs to the universal ribosomal protein uS15 family. As to quaternary structure, part of the 30S ribosomal subunit. Forms a bridge to the 50S subunit in the 70S ribosome, contacting the 23S rRNA.

In terms of biological role, one of the primary rRNA binding proteins, it binds directly to 16S rRNA where it helps nucleate assembly of the platform of the 30S subunit by binding and bridging several RNA helices of the 16S rRNA. Functionally, forms an intersubunit bridge (bridge B4) with the 23S rRNA of the 50S subunit in the ribosome. The chain is Small ribosomal subunit protein uS15 from Burkholderia mallei (strain NCTC 10247).